A 360-amino-acid polypeptide reads, in one-letter code: Peptide chain release factor 1 (360 aa).

Gln-235 carries the post-translational modification N5-methylglutamine.

The protein belongs to the prokaryotic/mitochondrial release factor family. In terms of processing, methylated by PrmC. Methylation increases the termination efficiency of RF1.

The protein resides in the cytoplasm. In terms of biological role, peptide chain release factor 1 directs the termination of translation in response to the peptide chain termination codons UAG and UAA. The sequence is that of Peptide chain release factor 1 from Burkholderia cenocepacia (strain ATCC BAA-245 / DSM 16553 / LMG 16656 / NCTC 13227 / J2315 / CF5610) (Burkholderia cepacia (strain J2315)).